The sequence spans 119 residues: Ribonuclease P protein component (119 aa).

Belongs to the RnpA family. In terms of assembly, consists of a catalytic RNA component (M1 or rnpB) and a protein subunit.

It carries out the reaction Endonucleolytic cleavage of RNA, removing 5'-extranucleotides from tRNA precursor.. RNaseP catalyzes the removal of the 5'-leader sequence from pre-tRNA to produce the mature 5'-terminus. It can also cleave other RNA substrates such as 4.5S RNA. The protein component plays an auxiliary but essential role in vivo by binding to the 5'-leader sequence and broadening the substrate specificity of the ribozyme. This chain is Ribonuclease P protein component, found in Cronobacter sakazakii (strain ATCC BAA-894) (Enterobacter sakazakii).